We begin with the raw amino-acid sequence, 91 residues long: Bacterial microcompartment shell protein PduJ (91 aa).

A BMC domain is found at 4–88; that stretch reads ALGLVETKGL…PHSDVEAILP (85 aa).

It belongs to the bacterial microcompartments protein family. In terms of assembly, homohexamer with a central pore of about 5.7 Angstroms in diameter. Interacts with PduP, which targets PduP to the BMC.

The protein localises to the bacterial microcompartment. The protein operates within polyol metabolism; 1,2-propanediol degradation. In terms of biological role, one of the major shell proteins of the bacterial microcompartment (BMC) dedicated to 1,2-propanediol (1,2-PD) degradation. The isolated BMC shell component protein ratio for J:A:B':B:K:T:U is approximately 15:10:7:6:1:1:2. At least one of PduA or PduJ is required for BMC assembly; it must be encoded as the first gene in the pdu operon. Required for structural integrity of BMCs and to mitigate propionaldehyde toxicity, probably joins facets responsible for BMC closure. Edge residues (particularly Lys-25) are important for function and assembly of the BMC. 80% identical to PduA; although their pore regions appear structurally identical, unlike PduA plays no role in 1,2-PD diffusion into or out of the BMC shell. If pduJ is cloned in the chromosomal position of pduA it is able to complement a pduA deletion; it then has a functional pore as it assumes the transport functions of PduA. Overexpression of this protein leads to aberrant filaments that extend the length of the cell, cross the cleavage furrow and impair division. The filaments form nanotubes with a hollow center. Modeling suggests PduJ is probably the hub for binding multiple enzymes to the interior of the BMC; modeling suggests PduC, PduD, PduG and PduM are targeted to PduJ. Its function is as follows. The 1,2-propanediol (1,2-PD) degradation bacterial microcompartment (BMC) concentrates low levels of 1,2-PD catabolic enzymes, concentrates volatile reaction intermediates thus enhancing pathway flux and keeps the level of toxic, mutagenic propionaldehyde low. The polypeptide is Bacterial microcompartment shell protein PduJ (Salmonella typhimurium (strain LT2 / SGSC1412 / ATCC 700720)).